The chain runs to 459 residues: Vanillin aminotransferase (459 aa).

Residues 115-116 (GS) and Asp-255 contribute to the pyridoxal 5'-phosphate site. Lys-284 is subject to N6-(pyridoxal phosphate)lysine. 320–321 (FT) is a pyridoxal 5'-phosphate binding site. A coiled-coil region spans residues 430-457 (LEELDELIRIYGKALKDTEKRVEELKSQ).

This sequence belongs to the class-III pyridoxal-phosphate-dependent aminotransferase family. In terms of tissue distribution, confined to the placenta of green fruits at high levels. Barely detectable in the pericarp and seeds as well as in the placenta of mature fruits.

It carries out the reaction vanillin + L-alanine = vanillylamine + pyruvate. The protein operates within aromatic compound metabolism; phenylpropanoid biosynthesis. Its function is as follows. Involved in the biosynthesis of capsaicinoids natural products, pungent alkaloids synthesized from phenylpropanoid intermediates in the placental tissue of chili pepper fruit acting as repellant on herbivorous mammals and conferring spiciness to hot peppers. Can transfer an amine from vanillylamine to pyruvate forming vanillin and L-alanine. In Capsicum annuum (Capsicum pepper), this protein is Vanillin aminotransferase.